A 322-amino-acid polypeptide reads, in one-letter code: Germ cell-specific gene 1-like protein (322 aa).

Residues 1–8 (MKTSRRGR) lie on the Cytoplasmic side of the membrane. Residues 9-29 (ALLAVALNLLALLFATTAFLT) traverse the membrane as a helical segment. Topologically, residues 30–122 (TYWCQGTQRV…FIDLAPASEK (93 aa)) are extracellular. The helical transmembrane segment at 123-143 (GVLWLSVVSEVLYILLLVVGF) threads the bilayer. Residues 144 to 163 (SLMCLELLHSSSVIDGLKLN) lie on the Cytoplasmic side of the membrane. The helical transmembrane segment at 164 to 184 (AFAAVFTVLSGLLGMVAHMMY) threads the bilayer. Topologically, residues 185-207 (TQVFQVTVSLGPEDWRPHSWDYG) are extracellular. A helical transmembrane segment spans residues 208–228 (WSFCLAWGSFTCCMAASVTTL). The Cytoplasmic segment spans residues 229–322 (NSYTKTVIEF…RQCWVLGHWV (94 aa)). Phosphoserine is present on S274.

It belongs to the GSG1 family. In terms of assembly, component of the inner core of AMPAR complexes. AMPAR complexes consist of an inner core made of 4 pore-forming GluA/GRIA proteins (GRIA1, GRIA2, GRIA3 and GRIA4) and 4 major auxiliary subunits arranged in a twofold symmetry. One of the two pairs of distinct binding sites is occupied either by CNIH2, CNIH3 or CACNG2, CACNG3. The other harbors CACNG2, CACNG3, CACNG4, CACNG8 or GSG1L. This inner core of AMPAR complexes is complemented by outer core constituents binding directly to the GluA/GRIA proteins at sites distinct from the interaction sites of the inner core constituents. Outer core constituents include at least PRRT1, PRRT2, CKAMP44/SHISA9, FRRS1L and NRN1. The proteins of the inner and outer core serve as a platform for other, more peripherally associated AMPAR constituents. Alone or in combination, these auxiliary subunits control the gating and pharmacology of the AMPAR complexes and profoundly impact their biogenesis and protein processing. In terms of tissue distribution, expressed in the brain (at protein level).

It is found in the cell membrane. The protein resides in the synapse. In terms of biological role, as a component of the inner core of AMPAR complexes, modifies AMPA receptor (AMPAR) gating. The chain is Germ cell-specific gene 1-like protein (Gsg1l) from Rattus norvegicus (Rat).